The primary structure comprises 117 residues: Putative phosphotransferase enzyme IIB component MG129 (117 aa).

A helical transmembrane segment spans residues 1 to 21 (MKWLLWLGYIFSFGLLYLWIV). A PTS EIIB type-1 domain is found at 42-117 (PFKVKDFVSA…ELKKKIEDEQ (76 aa)).

It localises to the membrane. The phosphoenolpyruvate-dependent sugar phosphotransferase system (PTS), a major carbohydrate active -transport system, catalyzes the phosphorylation of incoming sugar substrates concomitant with their translocation across the cell membrane. This Mycoplasma genitalium (strain ATCC 33530 / DSM 19775 / NCTC 10195 / G37) (Mycoplasmoides genitalium) protein is Putative phosphotransferase enzyme IIB component MG129.